We begin with the raw amino-acid sequence, 309 residues long: Partitioning defective protein 6 (309 aa).

The PB1 domain maps to 14 to 96 (TLQVKSKFDS…PLLRLLIQRR (83 aa)). The 18-residue stretch at 132-149 (ISNPEDFRQVSAIIDVDI) folds into the Pseudo-CRIB domain. Residues 156–249 (RVRLCKHGQE…NLIITVKPAN (94 aa)) form the PDZ domain. Residues 249–270 (NQRNTLSRGPSQQGTPNASEMS) show a composition bias toward polar residues. The disordered stretch occupies residues 249-309 (NQRNTLSRGP…DANDSDSGED (61 aa)).

Belongs to the PAR6 family. In terms of assembly, interacts with par-3, required for its peripheral localization, and with cdc-42, required for the activation of a par-3/par-6/pkc-3 complex. Colocalized with par-3 at all stages in early embryos, at the anterior cortex of the embryo. Patchy expression observed at the periphery after completion of meiosis I and in meiosis II, which on completion of metaphase II, is restricted to the anterior 85% of embryo length; this decreases to 55% in embryos between prophase and telophase of the first mitosis. During the first cleavage, expression is detected in the advancing furrow. Along with pkc-3, is unable to associate with the apical cortex of cells that lack par-3. Transiently coexpressed and colocalized with par-3 and pkc-3, asymmetrically in the developing somatic gonad, including the spermathecal precursor cells of L4 larvae.

Its subcellular location is the cytoplasm. It is found in the cell membrane. It localises to the cell junction. The protein resides in the tight junction. Functionally, necessary for apicobasal and anterior-posterior asymmetries associated with cell adhesion and gastrulation during the first few cell cycles of embryogenesis. Required for localizing/ maintaining par-3 at the cell periphery. Regulates mes-1 expression and/or localization pattern during early embryogenesis. Acts together with par-3 and pkc-3 in maintaining epithelial cell polarity in the distal spermatheca. Plays a role in endosome and Golgi body positioning. This Caenorhabditis elegans protein is Partitioning defective protein 6.